A 183-amino-acid polypeptide reads, in one-letter code: Peptidoglycan recognition protein 1 (183 aa).

An N-terminal signal peptide occupies residues 1 to 17 (MLFAWAPFPALLGLADS). Cystine bridges form between cysteine 18/cysteine 142, cysteine 34/cysteine 79, and cysteine 55/cysteine 61. One can recognise an N-acetylmuramoyl-L-alanine amidase domain in the interval 40-168 (KPVRYVVISH…RDVQSTLSPG (129 aa)).

This sequence belongs to the N-acetylmuramoyl-L-alanine amidase 2 family. In terms of tissue distribution, expressed in all regions of the brain.

It localises to the secreted. Its subcellular location is the cytoplasmic granule. In terms of biological role, innate immunity protein that plays several important functions in antimicrobial and antitumor defense systems. Acts as a pattern receptor that binds to murein peptidoglycans (PGN) of Gram-positive bacteria and thus provides bactericidal activity. Forms an equimolar complex with heat shock protein HSPA1A and induces programmed cell death through apoptosis and necroptosis in tumor cell lines by activating the TNFR1 receptor on the target cell membrane. In addition, acts in complex with the Ca(2+)-binding protein S100A4 as a chemoattractant able to induce lymphocyte movement. Mechanistically, this complex acts as a ligand of the chemotactic receptors CCR5 and CXCR3 which are present on the cells of the immune system. Promotes also the activation of lymphocytes that become able to kill virus-infected cells as well as tumor cells by modulating the spectrum of their target-cell specificity. Induction of cytotoxicity on monocyte surface requires interaction with TREM1 receptor. This Rattus norvegicus (Rat) protein is Peptidoglycan recognition protein 1 (Pglyrp1).